Here is a 448-residue protein sequence, read N- to C-terminus: Glutamyl-tRNA reductase (448 aa).

Substrate-binding positions include 49–52 (TCNR), S109, 114–116 (ETQ), and Q120. C50 functions as the Nucleophile in the catalytic mechanism. An NADP(+)-binding site is contributed by 189 to 194 (GAGEMG).

This sequence belongs to the glutamyl-tRNA reductase family. Homodimer.

The catalysed reaction is (S)-4-amino-5-oxopentanoate + tRNA(Glu) + NADP(+) = L-glutamyl-tRNA(Glu) + NADPH + H(+). Its pathway is porphyrin-containing compound metabolism; protoporphyrin-IX biosynthesis; 5-aminolevulinate from L-glutamyl-tRNA(Glu): step 1/2. Its function is as follows. Catalyzes the NADPH-dependent reduction of glutamyl-tRNA(Glu) to glutamate 1-semialdehyde (GSA). The polypeptide is Glutamyl-tRNA reductase (Staphylococcus epidermidis (strain ATCC 12228 / FDA PCI 1200)).